A 113-amino-acid chain; its full sequence is Hydrogenase maturation factor HypA (113 aa).

His-2 is a Ni(2+) binding site. Residues Cys-73, Cys-76, Cys-89, and Cys-92 each contribute to the Zn(2+) site.

It belongs to the HypA/HybF family.

Functionally, involved in the maturation of [NiFe] hydrogenases. Required for nickel insertion into the metal center of the hydrogenase. The protein is Hydrogenase maturation factor HypA of Azotobacter vinelandii.